A 41-amino-acid polypeptide reads, in one-letter code: Disintegrin obtustatin (41 aa).

4 disulfide bridges follow: Cys1–Cys10, Cys6–Cys29, Cys7–Cys34, and Cys19–Cys36. The 41-residue stretch at 1-41 folds into the Disintegrin domain; the sequence is CTTGPCCRQCKLKPAGTTCWKTSLTSHYCTGKSCDCPLYPG. The Cell attachment site; atypical (KTS) motif lies at 21 to 23; sequence KTS.

The protein belongs to the disintegrin family. Short disintegrin subfamily. Monomer. Expressed by the venom gland.

It is found in the secreted. Functionally, is a potent and selective inhibitor of alpha-1/beta-1 (ITGA1/ITGB1) integrin. It blocks the adhesion of alpha-1/beta-1-expressing K562 cells to immobilized collagens IV and I with IC(50) of 2 and 0.5 nM, respectively. Potently inhibits angiogenesis in chicken and in mouse model and reduces tumor development by half. Is 25-fold less potent than viperistatin. The chain is Disintegrin obtustatin from Macrovipera lebetina obtusa (Levant blunt-nosed viper).